The sequence spans 637 residues: Threonine--tRNA ligase (637 aa).

The 61-residue stretch at 1–61 (MPNVKLPDGN…KEDCSLIIVT (61 aa)) folds into the TGS domain. A catalytic region spans residues 242 to 533 (DHRKLGKALD…LIEHYAGKLP (292 aa)). Residues Cys-333, His-384, and His-510 each coordinate Zn(2+).

The protein belongs to the class-II aminoacyl-tRNA synthetase family. In terms of assembly, homodimer. It depends on Zn(2+) as a cofactor.

The protein localises to the cytoplasm. It catalyses the reaction tRNA(Thr) + L-threonine + ATP = L-threonyl-tRNA(Thr) + AMP + diphosphate + H(+). In terms of biological role, catalyzes the attachment of threonine to tRNA(Thr) in a two-step reaction: L-threonine is first activated by ATP to form Thr-AMP and then transferred to the acceptor end of tRNA(Thr). Also edits incorrectly charged L-seryl-tRNA(Thr). The polypeptide is Threonine--tRNA ligase (Legionella pneumophila subsp. pneumophila (strain Philadelphia 1 / ATCC 33152 / DSM 7513)).